Here is a 654-residue protein sequence, read N- to C-terminus: DNA ligase (654 aa).

Residues 31–35 (DSEYD), 80–81 (SL), and Glu-109 each bind NAD(+). Lys-111 functions as the N6-AMP-lysine intermediate in the catalytic mechanism. Residues Arg-132, Glu-166, Lys-280, and Lys-304 each coordinate NAD(+). 4 residues coordinate Zn(2+): Cys-398, Cys-401, Cys-416, and Cys-421. The BRCT domain maps to 579–654 (NIEGILSGKT…IWSEQDLLDL (76 aa)).

Belongs to the NAD-dependent DNA ligase family. LigA subfamily. Mg(2+) serves as cofactor. It depends on Mn(2+) as a cofactor.

The enzyme catalyses NAD(+) + (deoxyribonucleotide)n-3'-hydroxyl + 5'-phospho-(deoxyribonucleotide)m = (deoxyribonucleotide)n+m + AMP + beta-nicotinamide D-nucleotide.. Functionally, DNA ligase that catalyzes the formation of phosphodiester linkages between 5'-phosphoryl and 3'-hydroxyl groups in double-stranded DNA using NAD as a coenzyme and as the energy source for the reaction. It is essential for DNA replication and repair of damaged DNA. The protein is DNA ligase of Lactococcus lactis subsp. lactis (strain IL1403) (Streptococcus lactis).